We begin with the raw amino-acid sequence, 129 residues long: Small ribosomal subunit protein uS11 (129 aa).

It belongs to the universal ribosomal protein uS11 family. In terms of assembly, part of the 30S ribosomal subunit. Interacts with proteins S7 and S18. Binds to IF-3.

Functionally, located on the platform of the 30S subunit, it bridges several disparate RNA helices of the 16S rRNA. Forms part of the Shine-Dalgarno cleft in the 70S ribosome. The protein is Small ribosomal subunit protein uS11 of Francisella tularensis subsp. tularensis (strain FSC 198).